The chain runs to 232 residues: Phosphatidylserine decarboxylase proenzyme (232 aa).

Ser-190 (schiff-base intermediate with substrate; via pyruvic acid) is an active-site residue. The residue at position 190 (Ser-190) is a Pyruvic acid (Ser); by autocatalysis.

Belongs to the phosphatidylserine decarboxylase family. PSD-A subfamily. Heterodimer of a large membrane-associated beta subunit and a small pyruvoyl-containing alpha subunit. Pyruvate serves as cofactor. Post-translationally, is synthesized initially as an inactive proenzyme. Formation of the active enzyme involves a self-maturation process in which the active site pyruvoyl group is generated from an internal serine residue via an autocatalytic post-translational modification. Two non-identical subunits are generated from the proenzyme in this reaction, and the pyruvate is formed at the N-terminus of the alpha chain, which is derived from the carboxyl end of the proenzyme. The post-translation cleavage follows an unusual pathway, termed non-hydrolytic serinolysis, in which the side chain hydroxyl group of the serine supplies its oxygen atom to form the C-terminus of the beta chain, while the remainder of the serine residue undergoes an oxidative deamination to produce ammonia and the pyruvoyl prosthetic group on the alpha chain.

It localises to the cell membrane. The enzyme catalyses a 1,2-diacyl-sn-glycero-3-phospho-L-serine + H(+) = a 1,2-diacyl-sn-glycero-3-phosphoethanolamine + CO2. Its pathway is phospholipid metabolism; phosphatidylethanolamine biosynthesis; phosphatidylethanolamine from CDP-diacylglycerol: step 2/2. In terms of biological role, catalyzes the formation of phosphatidylethanolamine (PtdEtn) from phosphatidylserine (PtdSer). This Beijerinckia indica subsp. indica (strain ATCC 9039 / DSM 1715 / NCIMB 8712) protein is Phosphatidylserine decarboxylase proenzyme.